A 420-amino-acid chain; its full sequence is MTNNQNELGDVMDVLEDNIGYLTDRDREIPETDVAVIKYSAWWEIPVLETEDPLDFLTIGNNQCPASDDWDKLLNAELYDMPRRSQANSESTPPEHTWSGTSELGNYHYSYNDISIGMDAMSMNNRNRDDGFSSSSSSSQTSEGSEWLPEETEFKPKKVVTSEPLSPTPPETETRRLTKVQRRSMTDQEVEQRRKEANKKNSKNYNFNKKSKEAKLKEDLEKNHLYIERATAQEKQTLERIMECYTYFGDGNVLVIHQDAMQNFTEKEVFEEKLEQVDMDVARAREQSQELKSLKKLYQKHRQAYITATNDKALKKSKINTYGSRKSRALHSMNIAELELKKCILQFKIKKFERREKLLEEVENQIKQYFNFKESNHAGYMRLPQERQNRFEELCKTLKTSSPKTSIAGSHRRSTRSSEN.

Disordered regions lie at residues 84–103 (RSQA…GTSE) and 122–211 (SMNN…NKKS). Residues 85–103 (SQANSESTPPEHTWSGTSE) show a composition bias toward polar residues. Positions 184–199 (SMTDQEVEQRRKEANK) are enriched in basic and acidic residues. Coiled coils occupy residues 265 to 310 (TEKE…TATN) and 345 to 374 (LQFK…NFKE). Polar residues predominate over residues 399-408 (KTSSPKTSIA). Residues 399-420 (KTSSPKTSIAGSHRRSTRSSEN) are disordered. Residues 410-420 (SHRRSTRSSEN) show a composition bias toward basic residues.

This is an uncharacterized protein from Caenorhabditis elegans.